An 870-amino-acid polypeptide reads, in one-letter code: Pre-mRNA-processing factor 40 homolog B (870 aa).

WW domains are found at residues 92-125 (GPPR…KPSV) and 133-166 (LLSQ…RPKD). The interval 146 to 277 (TGKPYYYNNQ…RSGLSWSNRE (132 aa)) is disordered. Lysine 148 is subject to N6-acetyllysine. Residue lysine 175 forms a Glycyl lysine isopeptide (Lys-Gly) (interchain with G-Cter in SUMO2) linkage. A compositionally biased stretch (low complexity) spans 182 to 191 (QQTQQLQTLQ). Residues 192 to 211 (PQPPQPQPDPPPIPPGPIPV) are compositionally biased toward pro residues. FF domains lie at 276 to 330 (REKA…YKAQ), 340 to 397 (RLRA…VLFF), 410 to 470 (RRRN…HIRA), 490 to 550 (QRKN…YVEE), 554 to 610 (RFHD…LLEK), and 625 to 682 (RMRR…FLQV). Positions 604-640 (FNSLLEKAEARETEREKEEARRMRRREAAFRSMLRQA) form a coiled coil. The tract at residues 690–870 (HLHTKGRKHG…TLLQQLDDHQ (181 aa)) is disordered. Over residues 691 to 711 (LHTKGRKHGRKGKKHHRKRSH) the composition is skewed to basic residues. Composition is skewed to low complexity over residues 739–756 (SESG…ESGG) and 764–774 (SPSSHLLLGSD). Serine 764 bears the Phosphoserine mark. A compositionally biased stretch (basic residues) spans 778–794 (RKTKKPKKKTKKRRHKS). Over residues 804–824 (EDKAGKESEDREQEQDREPRQ) the composition is skewed to basic and acidic residues. Serine 831 bears the Phosphoserine mark. Lysine 837 participates in a covalent cross-link: Glycyl lysine isopeptide (Lys-Gly) (interchain with G-Cter in SUMO2). At serine 851 the chain carries Phosphoserine.

This sequence belongs to the PRPF40 family. As to quaternary structure, interacts with the N-terminus of HD.

It localises to the nucleus speckle. Its function is as follows. May be involved in pre-mRNA splicing. The polypeptide is Pre-mRNA-processing factor 40 homolog B (Prpf40b) (Mus musculus (Mouse)).